The chain runs to 443 residues: Crinkler effector protein 161 (443 aa).

Residues 1–17 form the signal peptide; the sequence is MVKLSCVIVGVPGDPFQ. Residues 18–56 are LQLFLAK domain; sequence VEIDEICELVAGLKDAIKKEKPDSIKCDADKLQLFKAAK. Positions 57–126 are DWL domain; sequence EDRTFSASGA…GMESPSISQI (70 aa). The HVLVXXP motif motif lies at 127–133; it reads HVLVVLP. Residues 134-439 form an effector domain region; the sequence is EDSESEGGTS…RSMPGYCCAN (306 aa). Short sequence motifs (nuclear localization signal) lie at residues 161-170 and 384-393; these read ADKKRKRYWH and HQPLKRLKLS.

Belongs to the Crinkler effector family.

It is found in the secreted. The protein resides in the host nucleus. Functionally, secreted effector that exhibits strong cell death suppression activity and suppresses cell death induced by a variety of effectors including CRN63, Avh241 and Avr3a. Protects host plants from biotic and abiotic stresses such as salinity and drought by up-regulation of many defense-related genes, including ABC transporters, Cytochrome P450 monooxygenases and receptor-like kinases (RLKs). Also enhances resistance to Phytophtora pathogens. This Phytophthora sojae (strain P6497) (Soybean stem and root rot agent) protein is Crinkler effector protein 161.